We begin with the raw amino-acid sequence, 174 residues long: Large ribosomal subunit protein uL16 (174 aa).

Belongs to the universal ribosomal protein uL16 family.

The chain is Large ribosomal subunit protein uL16 from Staphylothermus marinus (strain ATCC 43588 / DSM 3639 / JCM 9404 / F1).